The sequence spans 122 residues: Large ribosomal subunit protein uL14 (122 aa).

It belongs to the universal ribosomal protein uL14 family. Part of the 50S ribosomal subunit. Forms a cluster with proteins L3 and L19. In the 70S ribosome, L14 and L19 interact and together make contacts with the 16S rRNA in bridges B5 and B8.

In terms of biological role, binds to 23S rRNA. Forms part of two intersubunit bridges in the 70S ribosome. The protein is Large ribosomal subunit protein uL14 of Mycoplasmopsis agalactiae (strain NCTC 10123 / CIP 59.7 / PG2) (Mycoplasma agalactiae).